Here is a 314-residue protein sequence, read N- to C-terminus: tRNA pseudouridine synthase B (314 aa).

Residue aspartate 47 is the Nucleophile of the active site.

The protein belongs to the pseudouridine synthase TruB family. Type 1 subfamily.

The enzyme catalyses uridine(55) in tRNA = pseudouridine(55) in tRNA. In terms of biological role, responsible for synthesis of pseudouridine from uracil-55 in the psi GC loop of transfer RNAs. This Vibrio parahaemolyticus serotype O3:K6 (strain RIMD 2210633) protein is tRNA pseudouridine synthase B.